The primary structure comprises 234 residues: Phosphoribosylaminoimidazole-succinocarboxamide synthase (234 aa).

This sequence belongs to the SAICAR synthetase family.

The catalysed reaction is 5-amino-1-(5-phospho-D-ribosyl)imidazole-4-carboxylate + L-aspartate + ATP = (2S)-2-[5-amino-1-(5-phospho-beta-D-ribosyl)imidazole-4-carboxamido]succinate + ADP + phosphate + 2 H(+). It participates in purine metabolism; IMP biosynthesis via de novo pathway; 5-amino-1-(5-phospho-D-ribosyl)imidazole-4-carboxamide from 5-amino-1-(5-phospho-D-ribosyl)imidazole-4-carboxylate: step 1/2. The polypeptide is Phosphoribosylaminoimidazole-succinocarboxamide synthase (Pyrobaculum aerophilum (strain ATCC 51768 / DSM 7523 / JCM 9630 / CIP 104966 / NBRC 100827 / IM2)).